Here is a 229-residue protein sequence, read N- to C-terminus: Secretory carrier-associated membrane protein 4 (229 aa).

Over 1 to 39 (MSEKENNFPPLPKFIPVKPCFYQNFSDEIPVEHQVLVKR) the chain is Cytoplasmic. The next 4 helical transmembrane spans lie at 40–60 (IYRL…ACLA), 61–81 (WWIG…LLLF), 105–125 (FMAF…QAIG), and 149–169 (VVML…AIAI). Over 170–229 (MKVHRIYRGAGGSFQKAQTEWNTGTWRNPPSREAQYNNFSGNSLPEYPTVPSYPGSGQWP) the chain is Cytoplasmic. Threonine 194 carries the post-translational modification Phosphothreonine. Positions 208-229 (FSGNSLPEYPTVPSYPGSGQWP) are disordered.

The protein belongs to the SCAMP family.

The protein resides in the membrane. Probably involved in membrane protein trafficking. In Pongo abelii (Sumatran orangutan), this protein is Secretory carrier-associated membrane protein 4 (SCAMP4).